The chain runs to 133 residues: Small ribosomal subunit protein eS8 (133 aa).

Residues 1 to 22 (MGFYQGPDNRKITGGLKGKHRD) are disordered.

The protein belongs to the eukaryotic ribosomal protein eS8 family. In terms of assembly, part of the 30S ribosomal subunit.

This is Small ribosomal subunit protein eS8 from Saccharolobus islandicus (strain M.14.25 / Kamchatka #1) (Sulfolobus islandicus).